The primary structure comprises 209 residues: MPLFRNAQFEISIAKPSGLPPPNGAEIAFAGRSNAGKSSAINTLAGHVRLAYVSKTPGRTQLINFFRLNCGALLVDLPGYGYAAVPEKIRRQWQGLIETYLRTRESLIGLVLMMDSRHPMTDLDRQMIDWFAPSGKPIHVLLTKSDKLSRGPANATLLAVRAELTARYGDQVSVQLFSSLKKTGVEEVEKVVAGWLVPAAAEGEAPAGA.

The EngB-type G domain occupies 23 to 198 (NGAEIAFAGR…EKVVAGWLVP (176 aa)). Residues 31 to 38 (GRSNAGKS), 58 to 62 (GRTQL), 76 to 79 (DLPG), 143 to 146 (TKSD), and 177 to 179 (FSS) contribute to the GTP site. 2 residues coordinate Mg(2+): S38 and T60.

The protein belongs to the TRAFAC class TrmE-Era-EngA-EngB-Septin-like GTPase superfamily. EngB GTPase family. Mg(2+) serves as cofactor.

Necessary for normal cell division and for the maintenance of normal septation. The chain is Probable GTP-binding protein EngB from Azoarcus sp. (strain BH72).